A 444-amino-acid chain; its full sequence is E1B 55 kDa protein (444 aa).

Residues M1–Q42 are disordered. Phosphoserine occurs at positions 438 and 439.

It belongs to the adenoviridae E1B 55 kDa protein family. As to quaternary structure, interacts with host PML-4 and PML-5; this interaction promotes efficient subnuclear targeting of E1B-55K to PML nuclear bodies. Interacts with E4-ORF3 protein. Interacts with E4-ORF6 protein.

It is found in the host nucleus. It localises to the host cytoplasm. Its function is as follows. Plays a major role to prevent cellular inhibition of viral genome replication. Assembles an SCF-like E3 ubiquitin ligase complex based on the cellular proteins ELOB, ELOC, CUL5 and RBX1, in cooperation with viral E4orf6. This viral RING-type ligase ubiquitinates cellular substrates and targets them to proteasomal degradation: TP53/p53, LIG4, MRE11-RAD50-NBS1 (MRN) complex, ITGA3, DAXX and BLM. E1B-55K probably acts as the substrate-specific adapter of the SCF-like E3 ubiquitin ligase complex. Degradation of host TP53/p53 activity is essential for preventing E1A-induced TP53 accumulation that would otherwise lead to cell apoptosis and growth arrest. E1B-55K also inactivates TP53 transcription-factor activity by binding its transactivation domain. E1B-55K also functions as a SUMO1 E3 ligase for TP53 which causes the latter to be sequestered in promyelocytic leukemia (PML) nuclear bodies thereby contributing to maximal inhibition of TP53 function. In Canis lupus familiaris (Dog), this protein is E1B 55 kDa protein.